The chain runs to 113 residues: Large ribosomal subunit protein uL22 (113 aa).

Belongs to the universal ribosomal protein uL22 family. In terms of assembly, part of the 50S ribosomal subunit.

Functionally, this protein binds specifically to 23S rRNA; its binding is stimulated by other ribosomal proteins, e.g. L4, L17, and L20. It is important during the early stages of 50S assembly. It makes multiple contacts with different domains of the 23S rRNA in the assembled 50S subunit and ribosome. The globular domain of the protein is located near the polypeptide exit tunnel on the outside of the subunit, while an extended beta-hairpin is found that lines the wall of the exit tunnel in the center of the 70S ribosome. This Symbiobacterium thermophilum (strain DSM 24528 / JCM 14929 / IAM 14863 / T) protein is Large ribosomal subunit protein uL22.